Reading from the N-terminus, the 463-residue chain is 23S rRNA (uracil(1939)-C(5))-methyltransferase RlmD (463 aa).

The region spanning 14 to 78 (AVAPGSDPVV…PSYEQAHLLE (65 aa)) is the TRAM domain. [4Fe-4S] cluster contacts are provided by cysteine 91, cysteine 97, cysteine 100, and cysteine 179. S-adenosyl-L-methionine contacts are provided by glutamine 287, phenylalanine 316, asparagine 321, glutamate 337, asparagine 365, and aspartate 386. Cysteine 419 functions as the Nucleophile in the catalytic mechanism.

It belongs to the class I-like SAM-binding methyltransferase superfamily. RNA M5U methyltransferase family. RlmD subfamily.

It carries out the reaction uridine(1939) in 23S rRNA + S-adenosyl-L-methionine = 5-methyluridine(1939) in 23S rRNA + S-adenosyl-L-homocysteine + H(+). Catalyzes the formation of 5-methyl-uridine at position 1939 (m5U1939) in 23S rRNA. The polypeptide is 23S rRNA (uracil(1939)-C(5))-methyltransferase RlmD (Cupriavidus pinatubonensis (strain JMP 134 / LMG 1197) (Cupriavidus necator (strain JMP 134))).